A 364-amino-acid polypeptide reads, in one-letter code: Chorismate synthase (364 aa).

R48 and R54 together coordinate NADP(+). FMN-binding positions include 129 to 131 (RSS), 243 to 244 (NA), G288, 303 to 307 (KPTSS), and R329.

This sequence belongs to the chorismate synthase family. As to quaternary structure, homotetramer. The cofactor is FMNH2.

It catalyses the reaction 5-O-(1-carboxyvinyl)-3-phosphoshikimate = chorismate + phosphate. It participates in metabolic intermediate biosynthesis; chorismate biosynthesis; chorismate from D-erythrose 4-phosphate and phosphoenolpyruvate: step 7/7. Its function is as follows. Catalyzes the anti-1,4-elimination of the C-3 phosphate and the C-6 proR hydrogen from 5-enolpyruvylshikimate-3-phosphate (EPSP) to yield chorismate, which is the branch point compound that serves as the starting substrate for the three terminal pathways of aromatic amino acid biosynthesis. This reaction introduces a second double bond into the aromatic ring system. The sequence is that of Chorismate synthase from Chelativorans sp. (strain BNC1).